The following is a 331-amino-acid chain: Autoinducer 2 import system permease protein LsrD (331 aa).

10 helical membrane passes run 7-27 (YGWE…FGLS), 45-65 (ICIG…GIDI), 67-87 (FGST…AGVP), 90-110 (IAIP…AGLI), 118-138 (LVIT…LSGI), 162-182 (LLGL…FWLL), 212-232 (TLCL…VLLV), 240-260 (SDLG…GGAN), 261-281 (IYGG…VGYL), and 288-308 (IGTP…LVVV).

Belongs to the binding-protein-dependent transport system permease family. AraH/RbsC subfamily. As to quaternary structure, the complex is composed of two ATP-binding proteins (LsrA), two transmembrane proteins (LsrC and LsrD) and a solute-binding protein (LsrB).

The protein localises to the cell inner membrane. Part of the ABC transporter complex LsrABCD involved in autoinducer 2 (AI-2) import. Probably responsible for the translocation of the substrate across the membrane. This Yersinia enterocolitica serotype O:8 / biotype 1B (strain NCTC 13174 / 8081) protein is Autoinducer 2 import system permease protein LsrD (lsrD).